A 358-amino-acid chain; its full sequence is NADH-quinone oxidoreductase subunit H (358 aa).

8 consecutive transmembrane segments (helical) span residues 20–40 (ITVG…IPLI), 95–115 (ALFY…WAVI), 128–148 (IGLL…IIAG), 168–188 (ISYE…SGSM), 206–226 (VFSW…ISAV), 253–273 (GFAF…IAAL), 295–315 (TPSA…YLWI), and 334–354 (VLIP…ISPL).

It belongs to the complex I subunit 1 family. NDH-1 is composed of 14 different subunits. Subunits NuoA, H, J, K, L, M, N constitute the membrane sector of the complex.

Its subcellular location is the cell inner membrane. The catalysed reaction is a quinone + NADH + 5 H(+)(in) = a quinol + NAD(+) + 4 H(+)(out). NDH-1 shuttles electrons from NADH, via FMN and iron-sulfur (Fe-S) centers, to quinones in the respiratory chain. The immediate electron acceptor for the enzyme in this species is believed to be ubiquinone. Couples the redox reaction to proton translocation (for every two electrons transferred, four hydrogen ions are translocated across the cytoplasmic membrane), and thus conserves the redox energy in a proton gradient. This subunit may bind ubiquinone. The sequence is that of NADH-quinone oxidoreductase subunit H from Neisseria gonorrhoeae (strain ATCC 700825 / FA 1090).